The chain runs to 791 residues: Diacylglycerol kinase gamma (791 aa).

Disordered regions lie at residues 82-103 (KPRHETSDHPTEGASNSEANSA) and 117-154 (DEACAPDTESNMAEKQAPAEDQVAATPLEPPVPRSSSS). A compositionally biased stretch (basic and acidic residues) spans 83–92 (PRHETSDHPT). A compositionally biased stretch (polar residues) spans 94–103 (GASNSEANSA). 2 EF-hand domains span residues 175–210 (RPQDKLEFMFRLYDSDENGLLDQAEMDCIVNQMLHI) and 220–255 (ELRPILKEMLQGMDYDRDGFVSLQEWVHGGMTTIPL). Ca(2+) is bound by residues D188, D190, N192, E199, D233, D235, D237, and E244. Phorbol-ester/DAG-type zinc fingers lie at residues 271 to 321 (RHAW…IPGC) and 336 to 385 (QHAW…LCDG). The region spanning 430-564 (PGTHPLLVLV…LDRWHLEVIP (135 aa)) is the DAGKc domain. A disordered region spans residues 768-791 (APMMMGPPQKSSFFSLRRKSRSKD).

This sequence belongs to the eukaryotic diacylglycerol kinase family. As to expression, predominantly expressed in retina and in a much lesser extent in the brain. Other tissues contain extremely low levels of DGK-gamma.

It is found in the membrane. Its subcellular location is the cytoplasm. The protein resides in the cytosol. It localises to the cytoskeleton. The enzyme catalyses a 1,2-diacyl-sn-glycerol + ATP = a 1,2-diacyl-sn-glycero-3-phosphate + ADP + H(+). It carries out the reaction 1,2-didecanoyl-sn-glycerol + ATP = 1,2-didecanoyl-sn-glycero-3-phosphate + ADP + H(+). It catalyses the reaction 1-octadecanoyl-2-(5Z,8Z,11Z,14Z-eicosatetraenoyl)-sn-glycerol + ATP = 1-octadecanoyl-2-(5Z,8Z,11Z,14Z-eicosatetraenoyl)-sn-glycero-3-phosphate + ADP + H(+). The catalysed reaction is 1,2-di-(9Z-octadecenoyl)-sn-glycerol + ATP = 1,2-di-(9Z-octadecenoyl)-sn-glycero-3-phosphate + ADP + H(+). The enzyme catalyses 1-octadecanoyl-2-(9Z,12Z)-octadecadienoyl-sn-glycerol + ATP = 1-octadecanoyl-2-(9Z,12Z-octadecadienoyl)-sn-glycero-3-phosphate + ADP + H(+). The protein operates within lipid metabolism; glycerolipid metabolism. With respect to regulation, the activity is calcium-dependent. Requires phosphatidylserine for maximal activity. Its function is as follows. Diacylglycerol kinase that converts diacylglycerol/DAG into phosphatidic acid/phosphatidate/PA and regulates the respective levels of these two bioactive lipids. Thereby, acts as a central switch between the signaling pathways activated by these second messengers with different cellular targets and opposite effects in numerous biological processes. Has no apparent specificity with regard to the acyl compositions of diacylglycerol. Specifically expressed in the cerebellum where it controls the level of diacylglycerol which in turn regulates the activity of protein kinase C gamma. Through protein kinase C gamma, indirectly regulates the dendritic development of Purkinje cells, cerebellar long term depression and ultimately cerebellar motor coordination. In Homo sapiens (Human), this protein is Diacylglycerol kinase gamma (DGKG).